We begin with the raw amino-acid sequence, 101 residues long: Putative pterin-4-alpha-carbinolamine dehydratase (101 aa).

This sequence belongs to the pterin-4-alpha-carbinolamine dehydratase family.

The enzyme catalyses (4aS,6R)-4a-hydroxy-L-erythro-5,6,7,8-tetrahydrobiopterin = (6R)-L-erythro-6,7-dihydrobiopterin + H2O. The chain is Putative pterin-4-alpha-carbinolamine dehydratase from Nitrobacter winogradskyi (strain ATCC 25391 / DSM 10237 / CIP 104748 / NCIMB 11846 / Nb-255).